A 103-amino-acid polypeptide reads, in one-letter code: Glutaredoxin-C11 (103 aa).

Residues 1-102 (MERIRDLSSK…QMLKDAKAIW (102 aa)) enclose the Glutaredoxin domain. A disulfide bridge links Cys21 with Cys24.

This sequence belongs to the glutaredoxin family. CC-type subfamily.

The protein resides in the cytoplasm. Has a glutathione-disulfide oxidoreductase activity in the presence of NADPH and glutathione reductase. Reduces low molecular weight disulfides and proteins. This chain is Glutaredoxin-C11 (GRXC11), found in Arabidopsis thaliana (Mouse-ear cress).